We begin with the raw amino-acid sequence, 331 residues long: Retinol dehydrogenase 13 (331 aa).

Residue Ser-2 is modified to N-acetylserine. 45–51 (GANTGIG) is an NADP(+) binding site. Residue Ser-174 coordinates substrate. The active-site Proton acceptor is Tyr-200. A Phosphoserine modification is found at Ser-323.

It belongs to the short-chain dehydrogenases/reductases (SDR) family. Widely expressed. In the retina, detected in the inner segment of the photoreceptor cells. Weak signals are observed in a small population of inner nuclear neurons and the inner plexiform layer.

The protein localises to the mitochondrion inner membrane. The enzyme catalyses all-trans-retinol + NADP(+) = all-trans-retinal + NADPH + H(+). It participates in cofactor metabolism; retinol metabolism. Its function is as follows. Retinol dehydrogenase with a clear preference for NADP. Oxidizes all-trans-retinol, but seems to reduce all-trans-retinal with much higher efficiency. Has no activity toward steroids. The polypeptide is Retinol dehydrogenase 13 (RDH13) (Homo sapiens (Human)).